The sequence spans 411 residues: ATP-dependent Clp protease ATP-binding subunit ClpX (411 aa).

The region spanning 1-49 is the ClpX-type ZB domain; sequence MSDRDIRCSFCGRTQKEVKKLIAGPGVYICDECVKLAYDIIEEDEEEDV. Cys-8, Cys-11, Cys-30, and Cys-33 together coordinate Zn(2+). 115–122 lines the ATP pocket; the sequence is PTGVGKTL.

The protein belongs to the ClpX chaperone family. As to quaternary structure, component of the ClpX-ClpP complex. Forms a hexameric ring that, in the presence of ATP, binds to fourteen ClpP subunits assembled into a disk-like structure with a central cavity, resembling the structure of eukaryotic proteasomes.

Its function is as follows. ATP-dependent specificity component of the Clp protease. It directs the protease to specific substrates. Can perform chaperone functions in the absence of ClpP. The protein is ATP-dependent Clp protease ATP-binding subunit ClpX of Dictyoglomus thermophilum (strain ATCC 35947 / DSM 3960 / H-6-12).